The following is a 306-amino-acid chain: Bifunctional protein FolD 1 (306 aa).

Residues 168–170, Ser-193, and Ile-234 contribute to the NADP(+) site; that span reads GRS.

Belongs to the tetrahydrofolate dehydrogenase/cyclohydrolase family. Homodimer.

The enzyme catalyses (6R)-5,10-methylene-5,6,7,8-tetrahydrofolate + NADP(+) = (6R)-5,10-methenyltetrahydrofolate + NADPH. The catalysed reaction is (6R)-5,10-methenyltetrahydrofolate + H2O = (6R)-10-formyltetrahydrofolate + H(+). The protein operates within one-carbon metabolism; tetrahydrofolate interconversion. Its function is as follows. Catalyzes the oxidation of 5,10-methylenetetrahydrofolate to 5,10-methenyltetrahydrofolate and then the hydrolysis of 5,10-methenyltetrahydrofolate to 10-formyltetrahydrofolate. The polypeptide is Bifunctional protein FolD 1 (Rhizobium meliloti (strain 1021) (Ensifer meliloti)).